Reading from the N-terminus, the 169-residue chain is uncharacterized protein (169 aa).

To M.tuberculosis Rv1480.

This is an uncharacterized protein from Mycobacterium avium.